The chain runs to 393 residues: tRNA(Met) cytidine acetate ligase (393 aa).

3 residues coordinate ATP: glycine 81, asparagine 142, and arginine 167.

This sequence belongs to the TmcAL family.

The protein resides in the cytoplasm. It carries out the reaction cytidine(34) in elongator tRNA(Met) + acetate + ATP = N(4)-acetylcytidine(34) in elongator tRNA(Met) + AMP + diphosphate. Functionally, catalyzes the formation of N(4)-acetylcytidine (ac(4)C) at the wobble position of elongator tRNA(Met), using acetate and ATP as substrates. First activates an acetate ion to form acetyladenylate (Ac-AMP) and then transfers the acetyl group to tRNA to form ac(4)C34. The polypeptide is tRNA(Met) cytidine acetate ligase (Bacillus cereus (strain AH187)).